We begin with the raw amino-acid sequence, 510 residues long: NAD(P)H-quinone oxidoreductase subunit 2 B, chloroplastic (510 aa).

The next 13 membrane-spanning stretches (helical) occupy residues 24 to 44, 59 to 79, 99 to 119, 124 to 144, 150 to 170, 184 to 204, 229 to 249, 295 to 315, 323 to 343, 354 to 374, 395 to 415, 418 to 438, and 484 to 504; these read LLLF…GLIL, WFYF…LFRW, IFQF…VEYI, MAIT…MFLC, ITIF…SGYT, LLMG…LYGL, ISIA…LAPF, WHLL…LIAI, MLAY…IVGD, YMLF…LFGL, ALSL…AGFF, LHLF…IGLL, and MIVC…ILAI.

It belongs to the complex I subunit 2 family. As to quaternary structure, NDH is composed of at least 16 different subunits, 5 of which are encoded in the nucleus.

The protein localises to the plastid. It is found in the chloroplast thylakoid membrane. It carries out the reaction a plastoquinone + NADH + (n+1) H(+)(in) = a plastoquinol + NAD(+) + n H(+)(out). The catalysed reaction is a plastoquinone + NADPH + (n+1) H(+)(in) = a plastoquinol + NADP(+) + n H(+)(out). Functionally, NDH shuttles electrons from NAD(P)H:plastoquinone, via FMN and iron-sulfur (Fe-S) centers, to quinones in the photosynthetic chain and possibly in a chloroplast respiratory chain. The immediate electron acceptor for the enzyme in this species is believed to be plastoquinone. Couples the redox reaction to proton translocation, and thus conserves the redox energy in a proton gradient. This chain is NAD(P)H-quinone oxidoreductase subunit 2 B, chloroplastic, found in Acorus calamus (Sweet flag).